A 321-amino-acid chain; its full sequence is Ribose-phosphate pyrophosphokinase 1 (321 aa).

Positions 131, 133, 142, and 146 each coordinate Mg(2+).

Belongs to the ribose-phosphate pyrophosphokinase family.

It carries out the reaction D-ribose 5-phosphate + ATP = 5-phospho-alpha-D-ribose 1-diphosphate + AMP + H(+). This chain is Ribose-phosphate pyrophosphokinase 1 (PRS1), found in Candida albicans (Yeast).